We begin with the raw amino-acid sequence, 461 residues long: Bifunctional protein GlmU (461 aa).

The pyrophosphorylase stretch occupies residues 1–235 (MTDTRKQRAA…EDDLIGCDSK (235 aa)). Residues 13-16 (LAAG), Lys27, Gln80, 85-86 (GT), 108-110 (YGD), Gly146, Glu161, and Asn176 each bind UDP-N-acetyl-alpha-D-glucosamine. Position 110 (Asp110) interacts with Mg(2+). A linker region spans residues 236 to 256 (ADLAEAEAIFQQKRRRALMEA). The tract at residues 257–461 (GVTMVAPETV…ARTTDQNKKG (205 aa)) is N-acetyltransferase. Residues Arg322 and Lys340 each contribute to the UDP-N-acetyl-alpha-D-glucosamine site. His352 functions as the Proton acceptor in the catalytic mechanism. UDP-N-acetyl-alpha-D-glucosamine-binding residues include Tyr355 and Asn366. Acetyl-CoA-binding positions include Ala369, 375–376 (NY), Ser394, Ser412, and Arg429.

This sequence in the N-terminal section; belongs to the N-acetylglucosamine-1-phosphate uridyltransferase family. In the C-terminal section; belongs to the transferase hexapeptide repeat family. As to quaternary structure, homotrimer. It depends on Mg(2+) as a cofactor.

The protein localises to the cytoplasm. The enzyme catalyses alpha-D-glucosamine 1-phosphate + acetyl-CoA = N-acetyl-alpha-D-glucosamine 1-phosphate + CoA + H(+). The catalysed reaction is N-acetyl-alpha-D-glucosamine 1-phosphate + UTP + H(+) = UDP-N-acetyl-alpha-D-glucosamine + diphosphate. Its pathway is nucleotide-sugar biosynthesis; UDP-N-acetyl-alpha-D-glucosamine biosynthesis; N-acetyl-alpha-D-glucosamine 1-phosphate from alpha-D-glucosamine 6-phosphate (route II): step 2/2. The protein operates within nucleotide-sugar biosynthesis; UDP-N-acetyl-alpha-D-glucosamine biosynthesis; UDP-N-acetyl-alpha-D-glucosamine from N-acetyl-alpha-D-glucosamine 1-phosphate: step 1/1. It participates in bacterial outer membrane biogenesis; LPS lipid A biosynthesis. Catalyzes the last two sequential reactions in the de novo biosynthetic pathway for UDP-N-acetylglucosamine (UDP-GlcNAc). The C-terminal domain catalyzes the transfer of acetyl group from acetyl coenzyme A to glucosamine-1-phosphate (GlcN-1-P) to produce N-acetylglucosamine-1-phosphate (GlcNAc-1-P), which is converted into UDP-GlcNAc by the transfer of uridine 5-monophosphate (from uridine 5-triphosphate), a reaction catalyzed by the N-terminal domain. The sequence is that of Bifunctional protein GlmU from Hyphomonas neptunium (strain ATCC 15444).